We begin with the raw amino-acid sequence, 223 residues long: MNIAKLIDHTVLKPNSKKEDVMKVIEEAKKYNFASVCINPTWVKLAAEELAGHDVDVCTVIGFPLGANTTETKVFETKDVIAKGATEVDMVINVGALKDGDDEFVEKDIREVVQAAKGKALVKVIIETCLLTDEEKVRACELSVKAGADFVKTSTGFSTGGATAEDIALMRKTVGPNVGVKASGGVRTREDAEKMIEAGASRIGASASVAIVLNDEKGATDNY.

Asp89 acts as the Proton donor/acceptor in catalysis. Lys152 serves as the catalytic Schiff-base intermediate with acetaldehyde. The active-site Proton donor/acceptor is Lys181.

Belongs to the DeoC/FbaB aldolase family. DeoC type 1 subfamily.

The protein resides in the cytoplasm. It catalyses the reaction 2-deoxy-D-ribose 5-phosphate = D-glyceraldehyde 3-phosphate + acetaldehyde. Its pathway is carbohydrate degradation; 2-deoxy-D-ribose 1-phosphate degradation; D-glyceraldehyde 3-phosphate and acetaldehyde from 2-deoxy-alpha-D-ribose 1-phosphate: step 2/2. Functionally, catalyzes a reversible aldol reaction between acetaldehyde and D-glyceraldehyde 3-phosphate to generate 2-deoxy-D-ribose 5-phosphate. This is Deoxyribose-phosphate aldolase from Bacillus cytotoxicus (strain DSM 22905 / CIP 110041 / 391-98 / NVH 391-98).